The primary structure comprises 148 residues: Large ribosomal subunit protein bL9 (148 aa).

Belongs to the bacterial ribosomal protein bL9 family.

Its function is as follows. Binds to the 23S rRNA. The sequence is that of Large ribosomal subunit protein bL9 from Acinetobacter baumannii (strain AB307-0294).